The chain runs to 103 residues: Putative truncated guanine nucleotide exchange factor YLL017W (103 aa).

The SH3 domain maps to 26 to 97; it reads QPIDVVECTY…PPSFYTVHSK (72 aa).

The protein is Putative truncated guanine nucleotide exchange factor YLL017W of Saccharomyces cerevisiae (strain ATCC 204508 / S288c) (Baker's yeast).